We begin with the raw amino-acid sequence, 350 residues long: Phosphotriesterase-related protein (350 aa).

A divalent metal cation contacts are provided by H22, H24, E169, H201, H230, and D298.

Belongs to the metallo-dependent hydrolases superfamily. Phosphotriesterase family. A divalent metal cation is required as a cofactor.

The protein is Phosphotriesterase-related protein of Drosophila pseudoobscura pseudoobscura (Fruit fly).